Here is a 323-residue protein sequence, read N- to C-terminus: SPbeta prophage-derived uncharacterized protein YorG (323 aa).

Positions 222–272 (TAENLEKAIIEAVERQEQAEGIVAVTYEEQKQNNASEELDFNSLMDQIKEI) form a coiled coil.

This chain is SPbeta prophage-derived uncharacterized protein YorG (yorG), found in Bacillus subtilis (strain 168).